Consider the following 298-residue polypeptide: Interferon-inducible double-stranded RNA-dependent protein kinase activator A homolog B (298 aa).

DRBM domains lie at 20-87 (TPIQ…ILRG), 112-180 (NPVG…KFKT), and 225-293 (DYVK…YLKI).

It belongs to the PRKRA family. Homodimer. Interacts with dicer1 and eif2ak2/pkr. Also able to interact with dsRNA. Associates with ribosomes. In terms of tissue distribution, expressed in brain, heart, kidney, liver, nerve and spleen.

It is found in the cytoplasm. The protein resides in the perinuclear region. Its subcellular location is the nucleus. The protein localises to the nucleolus. Activates eif2ak2/pkr in the absence of double-stranded RNA (dsRNA), leading to phosphorylation of eif2s1/efi2-alpha and inhibition of translation and induction of apoptosis. Required for siRNA production by dicer1 and for subsequent siRNA-mediated post-transcriptional gene silencing. Does not seem to be required for processing of pre-miRNA to miRNA by dicer1. This Xenopus laevis (African clawed frog) protein is Interferon-inducible double-stranded RNA-dependent protein kinase activator A homolog B (prkra-b).